Reading from the N-terminus, the 102-residue chain is ATP-dependent Clp protease adapter protein ClpS (102 aa).

The protein belongs to the ClpS family. In terms of assembly, binds to the N-terminal domain of the chaperone ClpA.

Its function is as follows. Involved in the modulation of the specificity of the ClpAP-mediated ATP-dependent protein degradation. This Shewanella pealeana (strain ATCC 700345 / ANG-SQ1) protein is ATP-dependent Clp protease adapter protein ClpS.